The following is a 320-amino-acid chain: D-alanine--D-alanine ligase (320 aa).

One can recognise an ATP-grasp domain in the interval 120–314 (SSWFFANSIN…FTNLIAEIIK (195 aa)). 147–198 (MKRPYVIKPLTQGSSIGVEVIFEEDDFNFADYDFPYGDQVVIERYIKGREFQ) serves as a coordination point for ATP. 3 residues coordinate Mg(2+): Glu-267, Glu-281, and Asn-283.

Belongs to the D-alanine--D-alanine ligase family. Requires Mg(2+) as cofactor. The cofactor is Mn(2+).

The protein resides in the cytoplasm. It carries out the reaction 2 D-alanine + ATP = D-alanyl-D-alanine + ADP + phosphate + H(+). Its pathway is cell wall biogenesis; peptidoglycan biosynthesis. Functionally, cell wall formation. This Rickettsia akari (strain Hartford) protein is D-alanine--D-alanine ligase.